A 149-amino-acid polypeptide reads, in one-letter code: Protegrin-5 (149 aa).

The signal sequence occupies residues 1–29; it reads METQRASLCLGRWSLWLLLLGLVVPSASA. The propeptide occupies 30 to 130; it reads QALSYREAVL…DITCNEVQGV (101 aa). Residues 61-80 form a disordered region; the sequence is DQPPKADEDPGTPKPVSFTV. 4 cysteine pairs are disulfide-bonded: Cys85–Cys96, Cys107–Cys124, Cys136–Cys145, and Cys138–Cys143. An Arginine amide modification is found at Arg148.

It belongs to the cathelicidin family.

Its subcellular location is the secreted. Microbicidal activity. The polypeptide is Protegrin-5 (NPG5) (Sus scrofa (Pig)).